The primary structure comprises 642 residues: Wall-associated receptor kinase-like 6 (642 aa).

A signal peptide spans 1 to 28; the sequence is MKKTKTYQVFCIAALSVLTLQLINGSSA. Topologically, residues 29–357 are extracellular; the sequence is ATPPPPNSNS…PKITKPEKAS (329 aa). N-linked (GlcNAc...) asparagine glycans are attached at residues Asn37, Asn72, Asn95, Asn137, Asn216, Asn240, and Asn276. The atypical EGF-like stretch occupies residues 289-346; sequence CSCEYDYFSGMSYRICYCNYGYTGNPYLRHGCIDIDECEGHHNCGEGTCVNMPGTHSC. Intrachain disulfides connect Cys291-Cys304, Cys326-Cys337, and Cys332-Cys346. A helical transmembrane segment spans residues 358-378; the sequence is VLQGVLISLGVLLFVLGILGL. The Cytoplasmic segment spans residues 379–642; sequence YKFIKKRTRI…KPLSRKRIGN (264 aa). One can recognise a Protein kinase domain in the interval 432–642; the sequence is FSMNRVLGQG…KPLSRKRIGN (211 aa). ATP is bound by residues 438–446 and Lys460; that span reads LGQGGQGTV. Tyr505 is subject to Phosphotyrosine. Catalysis depends on Asp559, which acts as the Proton acceptor. 2 positions are modified to phosphothreonine: Thr593 and Thr598. Tyr606 carries the post-translational modification Phosphotyrosine.

The protein belongs to the protein kinase superfamily. Ser/Thr protein kinase family. In terms of tissue distribution, slightly expressed in the whole plant.

The protein resides in the membrane. It catalyses the reaction L-seryl-[protein] + ATP = O-phospho-L-seryl-[protein] + ADP + H(+). The enzyme catalyses L-threonyl-[protein] + ATP = O-phospho-L-threonyl-[protein] + ADP + H(+). In terms of biological role, serine/threonine-protein kinase that may function as a signaling receptor of extracellular matrix component. The chain is Wall-associated receptor kinase-like 6 (WAKL6) from Arabidopsis thaliana (Mouse-ear cress).